Consider the following 268-residue polypeptide: Mitochondrial distribution and morphology protein 12 (268 aa).

In terms of domain architecture, SMP-LTD spans 1-256 (MSFEINWQDL…WPSWINLDFN (256 aa)). The interval 75-94 (LPKDKIPEESDSGCQSADGE) is disordered.

Belongs to the MDM12 family. In terms of assembly, component of the ER-mitochondria encounter structure (ERMES) or MDM complex, composed of MMM1, MDM10, MDM12 and MDM34. An MMM1 homodimer associates with one molecule of MDM12 on each side in a pairwise head-to-tail manner, and the SMP-LTD domains of MMM1 and MDM12 generate a continuous hydrophobic tunnel for phospholipid trafficking.

The protein resides in the mitochondrion outer membrane. It localises to the endoplasmic reticulum membrane. Functionally, component of the ERMES/MDM complex, which serves as a molecular tether to connect the endoplasmic reticulum (ER) and mitochondria. Components of this complex are involved in the control of mitochondrial shape and protein biogenesis, and function in nonvesicular lipid trafficking between the ER and mitochondria. MDM12 is required for the interaction of the ER-resident membrane protein MMM1 and the outer mitochondrial membrane-resident beta-barrel protein MDM10. The MDM12-MMM1 subcomplex functions in the major beta-barrel assembly pathway that is responsible for biogenesis of all mitochondrial outer membrane beta-barrel proteins, and acts in a late step after the SAM complex. The MDM10-MDM12-MMM1 subcomplex further acts in the TOM40-specific pathway after the action of the MDM12-MMM1 complex. Essential for establishing and maintaining the structure of mitochondria and maintenance of mtDNA nucleoids. This chain is Mitochondrial distribution and morphology protein 12, found in Lachancea thermotolerans (strain ATCC 56472 / CBS 6340 / NRRL Y-8284) (Yeast).